The primary structure comprises 111 residues: Fluoride-specific ion channel FluC (111 aa).

The next 3 helical transmembrane spans lie at 2–22 (GLLL…RFAL), 36–56 (GILL…AFLI), and 71–91 (FLLV…SLDI). Na(+) contacts are provided by Gly-79 and Thr-82.

Belongs to the fluoride channel Fluc/FEX (TC 1.A.43) family.

It is found in the cell inner membrane. It catalyses the reaction fluoride(in) = fluoride(out). With respect to regulation, na(+) is not transported, but it plays an essential structural role and its presence is essential for fluoride channel function. In terms of biological role, fluoride-specific ion channel. Important for reducing fluoride concentration in the cell, thus reducing its toxicity. The polypeptide is Fluoride-specific ion channel FluC (Francisella tularensis subsp. holarctica (strain FTNF002-00 / FTA)).